A 61-amino-acid chain; its full sequence is Conotoxin Vn5.3 (61 aa).

The N-terminal stretch at 1–19 is a signal peptide; it reads MRCLPVFVILLLLIASAPG. A propeptide spanning residues 20–50 is cleaved from the precursor; sequence VDVQPKTKYYVPRASRRDFAKKTPKRLSKLR.

This sequence belongs to the conotoxin T superfamily. Contains 2 disulfide bonds that can be either 'C1-C3, C2-C4' or 'C1-C4, C2-C3', since these disulfide connectivities have been observed for conotoxins with cysteine framework V (for examples, see AC P0DQQ7 and AC P81755). Expressed by the venom duct.

The protein resides in the secreted. The sequence is that of Conotoxin Vn5.3 from Conus ventricosus (Mediterranean cone).